The primary structure comprises 171 residues: Co-chaperone protein HscB (171 aa).

Residues 2-74 (DYFTLFGLPA…LMRAEYLLSL (73 aa)) enclose the J domain.

It belongs to the HscB family. As to quaternary structure, interacts with HscA and stimulates its ATPase activity. Interacts with IscU.

Functionally, co-chaperone involved in the maturation of iron-sulfur cluster-containing proteins. Seems to help targeting proteins to be folded toward HscA. This chain is Co-chaperone protein HscB, found in Escherichia coli (strain SE11).